The sequence spans 37 residues: Large ribosomal subunit protein bL36 (37 aa).

This sequence belongs to the bacterial ribosomal protein bL36 family.

The sequence is that of Large ribosomal subunit protein bL36 from Deinococcus geothermalis (strain DSM 11300 / CIP 105573 / AG-3a).